The chain runs to 123 residues: Holo-[acyl-carrier-protein] synthase (123 aa).

2 residues coordinate Mg(2+): D8 and E55.

This sequence belongs to the P-Pant transferase superfamily. AcpS family. The cofactor is Mg(2+).

The protein localises to the cytoplasm. It catalyses the reaction apo-[ACP] + CoA = holo-[ACP] + adenosine 3',5'-bisphosphate + H(+). Transfers the 4'-phosphopantetheine moiety from coenzyme A to a Ser of acyl-carrier-protein. This Solidesulfovibrio magneticus (strain ATCC 700980 / DSM 13731 / RS-1) (Desulfovibrio magneticus) protein is Holo-[acyl-carrier-protein] synthase.